The sequence spans 139 residues: Nucleoside diphosphate kinase (139 aa).

Lys-10, Phe-58, Arg-86, Thr-92, Arg-104, and Asn-114 together coordinate ATP. The active-site Pros-phosphohistidine intermediate is His-117.

This sequence belongs to the NDK family. Homotetramer. Mg(2+) is required as a cofactor.

Its subcellular location is the cytoplasm. The catalysed reaction is a 2'-deoxyribonucleoside 5'-diphosphate + ATP = a 2'-deoxyribonucleoside 5'-triphosphate + ADP. It catalyses the reaction a ribonucleoside 5'-diphosphate + ATP = a ribonucleoside 5'-triphosphate + ADP. Functionally, major role in the synthesis of nucleoside triphosphates other than ATP. The ATP gamma phosphate is transferred to the NDP beta phosphate via a ping-pong mechanism, using a phosphorylated active-site intermediate. This is Nucleoside diphosphate kinase from Rhodococcus erythropolis (strain PR4 / NBRC 100887).